The primary structure comprises 218 residues: External core antigen (218 aa).

The N-terminal stretch at 1–19 (MYLFHLCLVFACVPCPTFQ) is a signal peptide. The HBEAG stretch occupies residues 26-28 (GWL). Basic residues predominate over residues 180 to 211 (RRRGGARASRSPRRRTPSPRRRRSQSPRRRRS). The segment at 180 to 218 (RRRGGARASRSPRRRTPSPRRRRSQSPRRRRSQSPSANC) is disordered. One copy of the 1; half-length repeat lies at 190–196 (SPRRRTP). Residues 190–212 (SPRRRTPSPRRRRSQSPRRRRSQ) form a 3 X 8 AA repeats of S-P-R-R-R-R-S-Q region. Residues 190–218 (SPRRRTPSPRRRRSQSPRRRRSQSPSANC) constitute a propeptide that is removed on maturation. 2 consecutive repeat copies span residues 197 to 204 (SPRRRRSQ) and 205 to 212 (SPRRRRSQ).

It belongs to the orthohepadnavirus precore antigen family. In terms of assembly, homodimerizes. Phosphorylated. Post-translationally, cleaved by host furin.

It is found in the secreted. The protein resides in the host nucleus. May regulate immune response to the intracellular capsid in acting as a T-cell tolerogen, by having an immunoregulatory effect which prevents destruction of infected cells by cytotoxic T-cells. This immune regulation may predispose to chronicity during perinatal infections and prevent severe liver injury during adult infections. This chain is External core antigen, found in Marmota monax (Woodchuck).